Consider the following 264-residue polypeptide: Thymidylate synthase (264 aa).

Arginine 21 contacts dUMP. Histidine 51 is a (6R)-5,10-methylene-5,6,7,8-tetrahydrofolate binding site. 126-127 (RR) contacts dUMP. Residue cysteine 146 is the Nucleophile of the active site. Residues 166–169 (RSAD), asparagine 177, and 207–209 (HLY) contribute to the dUMP site. Aspartate 169 provides a ligand contact to (6R)-5,10-methylene-5,6,7,8-tetrahydrofolate. Alanine 263 contributes to the (6R)-5,10-methylene-5,6,7,8-tetrahydrofolate binding site.

This sequence belongs to the thymidylate synthase family. Bacterial-type ThyA subfamily. In terms of assembly, homodimer.

It is found in the cytoplasm. The catalysed reaction is dUMP + (6R)-5,10-methylene-5,6,7,8-tetrahydrofolate = 7,8-dihydrofolate + dTMP. The protein operates within pyrimidine metabolism; dTTP biosynthesis. Its function is as follows. Catalyzes the reductive methylation of 2'-deoxyuridine-5'-monophosphate (dUMP) to 2'-deoxythymidine-5'-monophosphate (dTMP) while utilizing 5,10-methylenetetrahydrofolate (mTHF) as the methyl donor and reductant in the reaction, yielding dihydrofolate (DHF) as a by-product. This enzymatic reaction provides an intracellular de novo source of dTMP, an essential precursor for DNA biosynthesis. This Pseudomonas aeruginosa (strain LESB58) protein is Thymidylate synthase.